The chain runs to 333 residues: Beta-ketoacyl-[acyl-carrier-protein] synthase III (333 aa).

Residues C112 and H255 contribute to the active site. The tract at residues 256–260 (QANQR) is ACP-binding. The active site involves N285.

The protein belongs to the thiolase-like superfamily. FabH family. As to quaternary structure, homodimer.

The protein localises to the cytoplasm. The enzyme catalyses malonyl-[ACP] + acetyl-CoA + H(+) = 3-oxobutanoyl-[ACP] + CO2 + CoA. It participates in lipid metabolism; fatty acid biosynthesis. In terms of biological role, catalyzes the condensation reaction of fatty acid synthesis by the addition to an acyl acceptor of two carbons from malonyl-ACP. Catalyzes the first condensation reaction which initiates fatty acid synthesis and may therefore play a role in governing the total rate of fatty acid production. Possesses both acetoacetyl-ACP synthase and acetyl transacylase activities. Its substrate specificity determines the biosynthesis of branched-chain and/or straight-chain of fatty acids. The polypeptide is Beta-ketoacyl-[acyl-carrier-protein] synthase III (Synechococcus sp. (strain RCC307)).